Here is a 385-residue protein sequence, read N- to C-terminus: Lysine 6-dehydrogenase (385 aa).

This sequence belongs to the saccharopine dehydrogenase family. As to quaternary structure, homohexamer.

The enzyme catalyses L-lysine + NAD(+) = L-1-piperideine-6-carboxylate + NH4(+) + NADH + 2 H(+). Functionally, catalyzes the oxidative deamination of L-lysine in the presence of NAD. Can also use (S)-(2-aminoethyl)-L-cysteine as a substrate, but more slowly. Can use both NAD and NADP but the preferred substrate is NAD. The polypeptide is Lysine 6-dehydrogenase (lysDH) (Geobacillus stearothermophilus (Bacillus stearothermophilus)).